We begin with the raw amino-acid sequence, 254 residues long: Polysaccharide deacetylase domain-containing protein ECU11_0510 (254 aa).

A NodB homology domain is found at 26 to 210 (GMIAINFVDG…IGKDKGYRFV (185 aa)).

This Encephalitozoon cuniculi (strain GB-M1) (Microsporidian parasite) protein is Polysaccharide deacetylase domain-containing protein ECU11_0510.